We begin with the raw amino-acid sequence, 342 residues long: Phospho-N-acetylmuramoyl-pentapeptide-transferase (342 aa).

10 helical membrane passes run 8 to 28 (VAQPYFCSFLLSTILGFVIAP), 58 to 78 (GIPSMGGVIILLPCILSTAIF), 86 to 106 (IWVILTTMVAFAILGGVDDYL), 116 to 136 (ISLEAKLFAQLLIASAALIFL), 152 to 172 (GLIDLGWAYMPFAYIVVVGSS), 184 to 204 (LATLPIITSTAILGIIGHLSL), 213 to 233 (VVGANIPIFCSALVGSALSFL), 242 to 262 (VFMGDLGSLSLGASLGLMSVM), 267 to 287 (FIYAISGCIFVAEAISSMAQV), and 318 to 338 (IVTRAWVIAMVSFVVSLAAII).

It belongs to the glycosyltransferase 4 family. MraY subfamily. Mg(2+) serves as cofactor.

Its subcellular location is the cell inner membrane. The enzyme catalyses UDP-N-acetyl-alpha-D-muramoyl-L-alanyl-gamma-D-glutamyl-meso-2,6-diaminopimeloyl-D-alanyl-D-alanine + di-trans,octa-cis-undecaprenyl phosphate = di-trans,octa-cis-undecaprenyl diphospho-N-acetyl-alpha-D-muramoyl-L-alanyl-D-glutamyl-meso-2,6-diaminopimeloyl-D-alanyl-D-alanine + UMP. Its pathway is cell wall biogenesis; peptidoglycan biosynthesis. In terms of biological role, catalyzes the initial step of the lipid cycle reactions in the biosynthesis of the cell wall peptidoglycan: transfers peptidoglycan precursor phospho-MurNAc-pentapeptide from UDP-MurNAc-pentapeptide onto the lipid carrier undecaprenyl phosphate, yielding undecaprenyl-pyrophosphoryl-MurNAc-pentapeptide, known as lipid I. In Anaplasma marginale (strain Florida), this protein is Phospho-N-acetylmuramoyl-pentapeptide-transferase.